We begin with the raw amino-acid sequence, 404 residues long: Cysteine desulfurase IscS (404 aa).

Residues 75 to 76 (AT), asparagine 155, glutamine 183, and 203 to 205 (SGH) contribute to the pyridoxal 5'-phosphate site. Lysine 206 is subject to N6-(pyridoxal phosphate)lysine. A pyridoxal 5'-phosphate-binding site is contributed by threonine 243. Cysteine 328 functions as the Cysteine persulfide intermediate in the catalytic mechanism. Cysteine 328 provides a ligand contact to [2Fe-2S] cluster.

It belongs to the class-V pyridoxal-phosphate-dependent aminotransferase family. NifS/IscS subfamily. In terms of assembly, homodimer. Forms a heterotetramer with IscU, interacts with other sulfur acceptors. Pyridoxal 5'-phosphate is required as a cofactor.

It is found in the cytoplasm. It catalyses the reaction (sulfur carrier)-H + L-cysteine = (sulfur carrier)-SH + L-alanine. The protein operates within cofactor biosynthesis; iron-sulfur cluster biosynthesis. Master enzyme that delivers sulfur to a number of partners involved in Fe-S cluster assembly, tRNA modification or cofactor biosynthesis. Catalyzes the removal of elemental sulfur atoms from cysteine to produce alanine. Functions as a sulfur delivery protein for Fe-S cluster synthesis onto IscU, an Fe-S scaffold assembly protein, as well as other S acceptor proteins. In Shewanella halifaxensis (strain HAW-EB4), this protein is Cysteine desulfurase IscS.